Consider the following 317-residue polypeptide: Putative 2-hydroxyacid dehydrogenase SA2098 (317 aa).

Residues 155-156 (EI), 234-236 (ASR), and aspartate 260 each bind NAD(+). Arginine 236 is an active-site residue. Glutamate 265 is an active-site residue. Histidine 283 functions as the Proton donor in the catalytic mechanism. Residue 283–286 (HIGN) coordinates NAD(+).

Belongs to the D-isomer specific 2-hydroxyacid dehydrogenase family.

The sequence is that of Putative 2-hydroxyacid dehydrogenase SA2098 from Staphylococcus aureus (strain N315).